Consider the following 119-residue polypeptide: Small ribosomal subunit protein uS13m (119 aa).

It belongs to the universal ribosomal protein uS13 family. Part of the small ribosomal subunit.

It is found in the mitochondrion. Its function is as follows. Located at the top of the head of the small subunit, it contacts several helices of the small subunit rRNA. The protein is Small ribosomal subunit protein uS13m (RPS13) of Acanthamoeba castellanii (Amoeba).